The chain runs to 60 residues: Mastoparan-D (60 aa).

Positions 1–27 (MKNTILILFTAFIALLGFFGMSAEALA) are cleaved as a signal peptide. AXPX repeat units follow at residues 27-30 (ADPI), 31-34 (ADPV), 35-38 (AGPN), and 41-44 (ADPE). The propeptide occupies 28 to 45 (DPIADPVAGPNPEADPEA). Position 59 is a leucine amide (Leu-59).

It belongs to the MCD family. Mastoparan subfamily. Expressed by the venom gland.

It is found in the secreted. Its subcellular location is the target cell membrane. Its function is as follows. Antimicrobial and mast cell degranulating peptide. Has broad spectrum antibacterial activity against both Gram-positive and Gram-negative bacteria (S.aureus MIC=24-32 ug/ml, S.xylosus MIC=2 ug/ml, S.alactolyticus MIC=16 ug/ml, C.koseri MIC=4 ug/ml, E.coli MIC=8 ug/ml, K.pneumoniae MIC=32 ug/ml, P.aerugiosa MIC=128 ug/ml, S.choleraesuis MIC=16 ug/ml, S.typhimurium MIC=32 ug/ml, V.parahamelytics MIC=32 ug/ml). Affects membrane permeability of E.coli. Shows hemolytic activities on sheep, chicken and human erythrocytes. Its mast cell degranulation activity may be related to the activation of G-protein coupled receptors in mast cells as well as interaction with other proteins located in cell endosomal membranes in the mast cells. The sequence is that of Mastoparan-D from Vespa ducalis (Black-tailed hornet).